A 425-amino-acid polypeptide reads, in one-letter code: Serine--tRNA ligase (425 aa).

230-232 (TAE) contacts L-serine. 261–263 (RSE) provides a ligand contact to ATP. Glu284 is an L-serine binding site. Residue 348 to 351 (EISS) participates in ATP binding. Ser384 contributes to the L-serine binding site.

The protein belongs to the class-II aminoacyl-tRNA synthetase family. Type-1 seryl-tRNA synthetase subfamily. Homodimer. The tRNA molecule binds across the dimer.

Its subcellular location is the cytoplasm. It catalyses the reaction tRNA(Ser) + L-serine + ATP = L-seryl-tRNA(Ser) + AMP + diphosphate + H(+). The enzyme catalyses tRNA(Sec) + L-serine + ATP = L-seryl-tRNA(Sec) + AMP + diphosphate + H(+). It functions in the pathway aminoacyl-tRNA biosynthesis; selenocysteinyl-tRNA(Sec) biosynthesis; L-seryl-tRNA(Sec) from L-serine and tRNA(Sec): step 1/1. Its function is as follows. Catalyzes the attachment of serine to tRNA(Ser). Is also able to aminoacylate tRNA(Sec) with serine, to form the misacylated tRNA L-seryl-tRNA(Sec), which will be further converted into selenocysteinyl-tRNA(Sec). In Streptococcus pyogenes serotype M4 (strain MGAS10750), this protein is Serine--tRNA ligase.